We begin with the raw amino-acid sequence, 355 residues long: Guanine nucleotide-binding protein G(i) subunit alpha-2 (355 aa).

Gly-2 carries the N-myristoyl glycine lipid modification. Residue Cys-3 is the site of S-palmitoyl cysteine attachment. A G-alpha domain is found at 32 to 355 (REVKLLLLGA…KNNLKDCGLF (324 aa)). A G1 motif region spans residues 35–48 (KLLLLGAGESGKST). GTP is bound by residues 40 to 47 (GAGESGKS), 176 to 182 (LRTRVKT), 201 to 205 (DVGGQ), 270 to 273 (NKKD), and Ala-327. Mg(2+) contacts are provided by Ser-47 and Thr-182. Positions 174–182 (DVLRTRVKT) are G2 motif. Residues 197 to 206 (FKMFDVGGQR) form a G3 motif region. Residues 266–273 (ILFLNKKD) are G4 motif. The interval 325-330 (TCATDT) is G5 motif.

The protein belongs to the G-alpha family. G(i/o/t/z) subfamily. G proteins are composed of 3 units; alpha, beta and gamma. The alpha chain contains the guanine nucleotide binding site.

Its subcellular location is the cytoplasm. The protein resides in the cytoskeleton. It is found in the microtubule organizing center. It localises to the centrosome. The protein localises to the cell membrane. Guanine nucleotide-binding proteins (G proteins) are involved as modulators or transducers in various transmembrane signaling systems. The G(i) proteins are involved in hormonal regulation of adenylate cyclase: they inhibit the cyclase in response to beta-adrenergic stimuli. May play a role in cell division. In Gallus gallus (Chicken), this protein is Guanine nucleotide-binding protein G(i) subunit alpha-2 (GNAI2).